Here is a 169-residue protein sequence, read N- to C-terminus: T-cell receptor gamma chain C region DFL12 (169 aa).

Positions 1 to 136 are c region; sequence PSDKRLDADI…LQFMSTSAYY (136 aa). The helical transmembrane segment at 137–157 threads the bilayer; the sequence is TYLLLLLKSVIYLAIISFSLL. Over 158 to 169 the chain is Cytoplasmic; that stretch reads RRTSVCCNEKRS.

Its subcellular location is the membrane. The protein is T-cell receptor gamma chain C region DFL12 of Mus musculus (Mouse).